Reading from the N-terminus, the 325-residue chain is Tagatose 1,6-diphosphate aldolase (325 aa).

The protein belongs to the aldolase LacD family.

It carries out the reaction D-tagatofuranose 1,6-bisphosphate = D-glyceraldehyde 3-phosphate + dihydroxyacetone phosphate. It functions in the pathway carbohydrate metabolism; D-tagatose 6-phosphate degradation; D-glyceraldehyde 3-phosphate and glycerone phosphate from D-tagatose 6-phosphate: step 2/2. The sequence is that of Tagatose 1,6-diphosphate aldolase from Staphylococcus epidermidis (strain ATCC 12228 / FDA PCI 1200).